A 378-amino-acid chain; its full sequence is Stimulator of interferon genes protein (378 aa).

Residues 1–17 (MPHSSLHPSIPQPRGLR) are Cytoplasmic-facing. The mediates interaction with ZDHHC1 and ZDHHC11 stretch occupies residues 1–190 (MPHSSLHPSI…IYNQFHNNTL (190 aa)). A helical transmembrane segment spans residues 18–34 (AQKAALVLLSACLVALW). The Lumenal segment spans residues 35–44 (GLGEPPDYTL). The chain crosses the membrane as a helical span at residues 45–69 (KWLVLHLASQQMGLLIKGICSLAEE). Residues 70–91 (LCHVHSRYHGSYWRAVRACLCS) are Cytoplasmic-facing. A lipid anchor (S-palmitoyl cysteine) is attached at cysteine 88. The helical transmembrane segment at 92–106 (SMRCGALLLLSCYFY) threads the bilayer. Over 107–116 (CSLPNMADLP) the chain is Lumenal. The helical transmembrane segment at 117 to 134 (FTWMLALLGLSQALNILL) threads the bilayer. Topologically, residues 135–378 (GLQGLAPAEV…KPLPLRSDVF (244 aa)) are cytoplasmic. Residue lysine 150 forms a Glycyl lysine isopeptide (Lys-Gly) (interchain with G-Cter in ubiquitin) linkage. The cyclic dinucleotide-binding domain (CBD) stretch occupies residues 153–339 (FNVAHGLAWS…LQHLRQEERE (187 aa)). 2 residues coordinate 2',3'-cGAMP: serine 162 and tyrosine 167. 3',3'-c-di-GMP is bound by residues serine 162 and tyrosine 167. Tyrosine 167 contributes to the 2',3'-cUAMP binding site. Lysine 236 participates in a covalent cross-link: Glycyl lysine isopeptide (Lys-Gly) (interchain with G-Cter in ubiquitin). 2',3'-cGAMP contacts are provided by arginine 238 and threonine 263. 2',3'-cUAMP-binding residues include arginine 238 and threonine 263. 3',3'-c-di-GMP-binding positions include 238-241 (RVYT) and threonine 263. Positions 339-378 (EVTMGSTETSVMPGSSVLSQEPELLISGLEKPLPLRSDVF) are C-terminal tail (CTT). Phosphoserine is present on serine 354. Serine 357 and serine 365 each carry phosphoserine; by TBK1. A pLxIS motif motif is present at residues 362-365 (LLIS).

Belongs to the STING family. In terms of assembly, homodimer; forms a homodimer in absence of cyclic nucleotide (c-di-GMP or cGAMP); 'Lys-63'-linked ubiquitination at Lys-150 is required for homodimerization. Homotetramer; in presence of cyclic nucleotide (c-di-GMP or cGAMP), forms tetramers and higher-order oligomers through side-by-side packing. Interacts (when phosphorylated) with IRF3; following activation and phosphorylation on the pLxIS motif by TBK1, recruits IRF3. Interacts with RIGI, MAVS and SSR2. Interacts with RNF5 and TRIM56. Interacts with TBK1; when homodimer, leading to subsequent production of IFN-beta. Interacts with IFIT1 and IFIT2. Interacts with TRIM29; this interaction induces STING1 ubiquitination and subsequent degradation. Associates with the MHC-II complex. Interacts with STEEP1; interaction takes place upon cGAMP-activation and STING1 phosphorylation by MAP3K7/TAK1 and promotes STING1 translocation to COPII vesicles. Interacts with SEC24A, SEC24B and SEC24C; promoting translocation to COPII vesicles. Interacts (when ubiquitinated) with SQSTM1; leading to relocalization to autophagosomes. Interacts with SURF4. Interacts with HNRNPA2B1. Interacts with ZDHHC1; ZDHHC1 constitutively interacts with STING1 and in presence of DNA viruses activates it by promoting its cGAMP-induced oligomerization and the recruitment of downstream signaling components. Interacts with ZDHHC11; in presence of DNA viruses promotes the recruitment of IRF3 to STING1. Interacts with TOMM70. Interacts with TAB1; promoting recruitment of TAB1 to the endoplasmic reticulum membrane and subsequent activation of MAP3K7/TAK1. Interacts (via transmembrane domain) with TMEM203. Interacts with DDX41. Post-translationally, phosphorylation by TBK1 leads to activation and production of IFN-beta. Following cyclic nucleotide (c-di-GMP or cGAMP)-binding, activation and translocation from the endoplasmic reticulum, STING1 is phosphorylated by TBK1 at Ser-365 in the pLxIS motif. The phosphorylated pLxIS motif constitutes an IRF3-binding motif, leading to recruitment of the transcription factor IRF3 to induce type-I interferons and other cytokines. Phosphorylated on tyrosine residues upon MHC-II aggregation. Dephosphorylation by PPP6C leads to inactivation and decreased production of IFN-beta. Phosphorylation at Ser-357 is also required to activate IRF3. Phosphorylation at Ser-354 by MAP3K7/TAK1 facilitates its interaction with STEEP1, promoting STING1 translocation to COPII vesicles. In terms of processing, ubiquitinated. Ubiquitinated via 'Lys-63'-linked ubiquitin chains in response to double-stranded DNA treatment, leading to relocalization to autophagosomes and subsequent degradation; this process is dependent on SQSTM1. 'Lys-63'-linked ubiquitination mediated by TRIM56 at Lys-150 promotes homodimerization and recruitment of the antiviral kinase TBK1 and subsequent production of IFN-beta. 'Lys-48'-linked polyubiquitination at Lys-150 occurring after viral infection is mediated by RNF5 and leads to proteasomal degradation. 'Lys-11'-linked polyubiquitination at Lys-150 by RNF26 leads to stabilize STING1: it protects STING1 from RNF5-mediated 'Lys-48'-linked polyubiquitination. 'Lys-33'-linked and 'Lys-48'-linked deubiquitinated by USP20; leading to its stabilization and promotion of innate antiviral response. 'Lys-48'-linked deubiquitinated by USP44; leading to its stabilization and promotion of innate antiviral response. 'Lys-63'-linked deubiquitinated by USP49; leading to inhibition of the subsequent recruitment of TBK1 to the signaling complex. 'Lys-63'-linked ubiquitination mediated by RNF39 promotes the activation of the cGAS-STING pathway. Palmitoylation takes place in the Golgi apparatus and creates a platform for the recruitment of TBK1.

It is found in the endoplasmic reticulum membrane. It localises to the cytoplasm. Its subcellular location is the perinuclear region. The protein localises to the endoplasmic reticulum-Golgi intermediate compartment membrane. The protein resides in the golgi apparatus membrane. It is found in the cytoplasmic vesicle. It localises to the autophagosome membrane. Its subcellular location is the mitochondrion outer membrane. The protein localises to the cell membrane. It catalyses the reaction H(+)(in) = H(+)(out). Facilitator of innate immune signaling that acts as a sensor of cytosolic DNA from bacteria and viruses and promotes the production of type I interferon (IFN-alpha and IFN-beta). Innate immune response is triggered in response to non-CpG double-stranded DNA from viruses and bacteria delivered to the cytoplasm. Acts by binding cyclic dinucleotides: recognizes and binds cyclic di-GMP (c-di-GMP), a second messenger produced by bacteria, cyclic UMP-AMP (2',3'-cUAMP), and cyclic GMP-AMP (cGAMP), a messenger produced by CGAS in response to DNA virus in the cytosol. Upon binding to c-di-GMP or cGAMP, STING oligomerizes, translocates from the endoplasmic reticulum and is phosphorylated by TBK1 on the pLxIS motif, leading to recruitment and subsequent activation of the transcription factor IRF3 to induce expression of type I interferon and exert a potent anti-viral state. Exhibits 2',3' phosphodiester linkage-specific ligand recognition: can bind both 2'-3' linked cGAMP (2'-3'-cGAMP) and 3'-3' linked cGAMP but is preferentially activated by 2'-3' linked cGAMP. The preference for 2'-3'-cGAMP, compared to other linkage isomers is probably due to the ligand itself, whichs adopts an organized free-ligand conformation that resembles the STING1-bound conformation and pays low energy costs in changing into the active conformation. In addition to promote the production of type I interferons, plays a direct role in autophagy. Following cGAMP-binding, STING1 buds from the endoplasmic reticulum into COPII vesicles, which then form the endoplasmic reticulum-Golgi intermediate compartment (ERGIC). The ERGIC serves as the membrane source for WIPI2 recruitment and LC3 lipidation, leading to formation of autophagosomes that target cytosolic DNA or DNA viruses for degradation by the lysosome. Promotes autophagy by acting as a proton channel that directs proton efflux from the Golgi to facilitate MAP1LC3B/LC3B lipidation. The autophagy- and interferon-inducing activities can be uncoupled and autophagy induction is independent of TBK1 phosphorylation. Autophagy is also triggered upon infection by bacteria: following c-di-GMP-binding, which is produced by live Gram-positive bacteria, promotes reticulophagy. May be involved in translocon function, the translocon possibly being able to influence the induction of type I interferons. May be involved in transduction of apoptotic signals via its association with the major histocompatibility complex class II (MHC-II). The protein is Stimulator of interferon genes protein of Bos taurus (Bovine).